A 458-amino-acid polypeptide reads, in one-letter code: Phosphoglucosamine mutase (458 aa).

Ser-106 serves as the catalytic Phosphoserine intermediate. Positions 106, 247, 249, and 251 each coordinate Mg(2+). At Ser-106 the chain carries Phosphoserine.

It belongs to the phosphohexose mutase family. The cofactor is Mg(2+). Activated by phosphorylation.

It catalyses the reaction alpha-D-glucosamine 1-phosphate = D-glucosamine 6-phosphate. In terms of biological role, catalyzes the conversion of glucosamine-6-phosphate to glucosamine-1-phosphate. The protein is Phosphoglucosamine mutase of Chlamydia trachomatis serovar D (strain ATCC VR-885 / DSM 19411 / UW-3/Cx).